Reading from the N-terminus, the 460-residue chain is Chromosomal replication initiator protein DnaA 1 (460 aa).

The segment at 1-68 (MRAWEEFLLL…KSGLVNNNNK (68 aa)) is domain I, interacts with DnaA modulators. The tract at residues 68–102 (KPIRVHVTSVDKAAPFYKEKQMQQEKTAYFTMHYG) is domain II. A domain III, AAA+ region region spans residues 103–321 (SVNPEMTFSN…HALNLLAKRV (219 aa)). ATP is bound by residues glycine 151, glycine 153, lysine 154, and threonine 155. Positions 322 to 460 (MYKKLSHQLL…EFFPSEEMII (139 aa)) are domain IV, binds dsDNA.

Belongs to the DnaA family. As to quaternary structure, oligomerizes as a right-handed, spiral filament on DNA at oriC.

The protein resides in the cytoplasm. Functionally, plays an essential role in the initiation and regulation of chromosomal replication. ATP-DnaA binds to the origin of replication (oriC) to initiate formation of the DNA replication initiation complex once per cell cycle. Binds the DnaA box (a 9 base pair repeat at the origin) and separates the double-stranded (ds)DNA. Forms a right-handed helical filament on oriC DNA; dsDNA binds to the exterior of the filament while single-stranded (ss)DNA is stabiized in the filament's interior. The ATP-DnaA-oriC complex binds and stabilizes one strand of the AT-rich DNA unwinding element (DUE), permitting loading of DNA polymerase. After initiation quickly degrades to an ADP-DnaA complex that is not apt for DNA replication. Binds acidic phospholipids. This chain is Chromosomal replication initiator protein DnaA 1, found in Chlamydia pneumoniae (Chlamydophila pneumoniae).